Consider the following 495-residue polypeptide: UDP-glycosyltransferase 1 (495 aa).

Histidine 24 acts as the Proton acceptor in catalysis. Histidine 24 serves as a coordination point for an anthocyanidin. The active-site Charge relay is aspartate 129. UDP-alpha-D-glucose-binding residues include glutamine 358, histidine 373, tryptophan 376, asparagine 377, serine 378, and glutamate 381. Glycine 396 lines the an anthocyanidin pocket. Residues aspartate 397 and glutamine 398 each coordinate UDP-alpha-D-glucose.

This sequence belongs to the UDP-glycosyltransferase family.

It carries out the reaction oleanolate + UDP-alpha-D-glucose = oleanolate 3-O-beta-D-glucoside + UDP + H(+). In terms of biological role, catalyzes the transfer of a glucose (Glc) moiety from UDP-Glc to the C-3 position of the oleanane sapogenins oleanolate and hederagenin. The monoglucosylated hederagenin 3-O-beta-D-glucoside is a feeding deterrent of the yellow-striped flea beetle (Phyllotreta nemorum). This Barbarea vulgaris (Yellow rocket) protein is UDP-glycosyltransferase 1.